Reading from the N-terminus, the 422-residue chain is MIDLETIGRRAKTAARTLAKVSTEQKNAALHAIADGLLARQDEILSANAADVADAERAGTPPAIVDRMLLTEARLATIANDCRKVAELPDPVGEIFDRRELPSGLRLYKRRVPIGVIGAIYEARPNVTVDIAALCLKAGNAVILRGGSDIARSVAATTTVIAEALEQAGLPIFAVQSITDPDRELVRQLLRLDRYVDMIIPRGGASLHRFCVENATVPVIVGGMGVSHIYVEPSADFARAVPVVVNAKVQRPGACNALDTLLVHRAAAPVFLPMVAAALAEYNVELRCDLETLAILADAPGHENWQLRPAEPADFGREFLALIVAIKVVGDIDEALDHIAQYGGHSEAILTGDPASAARFTREVDATAVFVNASTRFNDGGQFGLGAEVAISTNRLHARGPMGLQELTTYTWIGEGDYLVRA.

It belongs to the gamma-glutamyl phosphate reductase family.

The protein resides in the cytoplasm. It carries out the reaction L-glutamate 5-semialdehyde + phosphate + NADP(+) = L-glutamyl 5-phosphate + NADPH + H(+). It functions in the pathway amino-acid biosynthesis; L-proline biosynthesis; L-glutamate 5-semialdehyde from L-glutamate: step 2/2. Functionally, catalyzes the NADPH-dependent reduction of L-glutamate 5-phosphate into L-glutamate 5-semialdehyde and phosphate. The product spontaneously undergoes cyclization to form 1-pyrroline-5-carboxylate. This Chloroflexus aggregans (strain MD-66 / DSM 9485) protein is Gamma-glutamyl phosphate reductase.